Here is a 282-residue protein sequence, read N- to C-terminus: Phosphate import ATP-binding protein PstB (282 aa).

The disordered stretch occupies residues 1 to 33 (MNMAETQLNPIARPTAPAGFDPAQSGQSQAPSR). In terms of domain architecture, ABC transporter spans 36 to 277 (IEINDLNFFY…PVRKETEDYI (242 aa)). Residue 68-75 (GPSGCGKS) coordinates ATP.

The protein belongs to the ABC transporter superfamily. Phosphate importer (TC 3.A.1.7) family. In terms of assembly, the complex is composed of two ATP-binding proteins (PstB), two transmembrane proteins (PstC and PstA) and a solute-binding protein (PstS).

It localises to the cell inner membrane. It catalyses the reaction phosphate(out) + ATP + H2O = ADP + 2 phosphate(in) + H(+). Functionally, part of the ABC transporter complex PstSACB involved in phosphate import. Responsible for energy coupling to the transport system. This Paraburkholderia xenovorans (strain LB400) protein is Phosphate import ATP-binding protein PstB.